The following is a 590-amino-acid chain: J protein JJJ1 (590 aa).

The 70-residue stretch at 3–72 (TCYYELLGVE…RAWYDSHKEQ (70 aa)) folds into the J domain. Residues 269-284 (EQRKLKEQQRKNELNN) are compositionally biased toward basic and acidic residues. The disordered stretch occupies residues 269-293 (EQRKLKEQQRKNELNNRRKFGNDNN). A C2H2-type 1 zinc finger spans residues 338–362 (YECFICNKTFKSEKQLKNHINTKLH). Ser-393 carries the post-translational modification Phosphoserine. The tract at residues 441–546 (EVEDVSSDEN…TLPSSMSPTS (106 aa)) is disordered. A compositionally biased stretch (basic residues) spans 455–467 (TKNKKKRKKKKKA). A compositionally biased stretch (basic and acidic residues) spans 480–489 (DDTKDKRSNE). At Thr-504 the chain carries Phosphothreonine. Residues 513–527 (KAKKKKGKQPKKNSK) are compositionally biased toward basic residues. A compositionally biased stretch (low complexity) spans 528-546 (STKSTPSLSTLPSSMSPTS). The C2H2-type 2 zinc-finger motif lies at 549-573 (EVCTTCGESFDSRNKLFNHVKIAGH).

Its subcellular location is the nucleus. The chain is J protein JJJ1 (JJJ1) from Saccharomyces cerevisiae (strain ATCC 204508 / S288c) (Baker's yeast).